A 171-amino-acid chain; its full sequence is Neuronal vesicle trafficking-associated protein 2 (171 aa).

Residues 1 to 21 (MVKLNSNPGEKGAKPPSVEDG) form a disordered region. Topologically, residues 1-71 (MVKLNSNPGE…FRVPKIAEFT (71 aa)) are cytoplasmic. Residues 72–92 (VTILVSLALAFLACIVFLVVY) traverse the membrane as a helical; Signal-anchor for type II membrane protein segment. The Lumenal portion of the chain corresponds to 93 to 171 (KAFTYDHSCP…EPKPPKTQGH (79 aa)).

This sequence belongs to the NSG family. Specifically expressed in neural and neuroendocrine tissues. Pituitary and less in adrenal gland and testis. Expressed in the hippocampus throughout development. Remains enriched in layer V cortical neurons during development. At P0, broadly expressed in the neocortex. Is down-regulated overall at P8 and P14, but remains relatively enriched in layer V. At P0 is lower expressed in the cerebellum. Expression remains low throughout development, and is undetectable by adulthood.

The protein localises to the membrane. It is found in the golgi apparatus. The protein resides in the trans-Golgi network membrane. Its subcellular location is the cell projection. It localises to the dendrite. The protein localises to the endosome membrane. It is found in the early endosome membrane. The protein resides in the late endosome membrane. Its subcellular location is the lysosome lumen. It localises to the cytoplasmic vesicle membrane. The protein localises to the golgi stack membrane. It is found in the endosome. The protein resides in the multivesicular body membrane. The protein is Neuronal vesicle trafficking-associated protein 2 of Mus musculus (Mouse).